A 330-amino-acid chain; its full sequence is Zinc finger Ran-binding domain-containing protein 2 (330 aa).

Serine 9 carries the post-translational modification Phosphoserine. The RanBP2-type 1 zinc finger occupies 9-40; sequence SDGDWICPDKKCGNVNFARRTSCNRCGREKTT. 3 positions are modified to N6-acetyllysine: lysine 18, lysine 54, and lysine 92. The RanBP2-type 2 zinc-finger motif lies at 65–94; it reads SANDWQCKTCSNVNWARRSECNMCNTPKYA. Residues 117-330 are disordered; that stretch reads REESDGEYDE…SGSRSSSKKK (214 aa). Serine 120, serine 153, serine 181, serine 188, and serine 193 each carry phosphoserine. Over residues 150–163 the composition is skewed to acidic residues; that stretch reads DKESEGEEEDEDED. A required for nuclear targeting region spans residues 151-324; that stretch reads KESEGEEEDE…SSGSSHSGSR (174 aa). Residues 196 to 210 are compositionally biased toward basic residues; sequence KKSNRRSRSKSRSSH. Composition is skewed to low complexity over residues 211-224 and 232-242; these read SRSS…SSSR and RSSSSSQSRSR. 2 stretches are compositionally biased toward basic residues: residues 251–273 and 298–314; these read SRGS…RKRS and RKKR…RHRS. At threonine 303 the chain carries Phosphothreonine. A phosphoserine mark is found at serine 305, serine 307, and arginine 310. Low complexity predominate over residues 315 to 330; that stretch reads SSGSSHSGSRSSSKKK.

Belongs to the ZRANB2 family. As to quaternary structure, interacts with the C-terminal half of SNRNP70, the Arg/Ser-rich domain of AKAP17A as well as with U2AF1 and CLK1. In terms of processing, isoform 2 is phosphorylated on Ser-310 upon DNA damage, probably by ATM or ATR.

The protein localises to the nucleus. Its function is as follows. Splice factor required for alternative splicing of TRA2B/SFRS10 transcripts. Binds to ssRNA containing the consensus sequence 5'-AGGUAA-3'. May interfere with constitutive 5'-splice site selection. The sequence is that of Zinc finger Ran-binding domain-containing protein 2 (ZRANB2) from Homo sapiens (Human).